Consider the following 445-residue polypeptide: Phosphoglucosamine mutase (445 aa).

Serine 102 acts as the Phosphoserine intermediate in catalysis. Residues serine 102, aspartate 241, aspartate 243, and aspartate 245 each contribute to the Mg(2+) site. A Phosphoserine modification is found at serine 102.

Belongs to the phosphohexose mutase family. Requires Mg(2+) as cofactor. Activated by phosphorylation.

It carries out the reaction alpha-D-glucosamine 1-phosphate = D-glucosamine 6-phosphate. Its function is as follows. Catalyzes the conversion of glucosamine-6-phosphate to glucosamine-1-phosphate. This Shewanella oneidensis (strain ATCC 700550 / JCM 31522 / CIP 106686 / LMG 19005 / NCIMB 14063 / MR-1) protein is Phosphoglucosamine mutase.